Here is a 392-residue protein sequence, read N- to C-terminus: Formate-dependent phosphoribosylglycinamide formyltransferase (392 aa).

N(1)-(5-phospho-beta-D-ribosyl)glycinamide contacts are provided by residues 22–23 and glutamate 82; that span reads EL. ATP-binding positions include arginine 114, lysine 155, 160–165, 195–198, and glutamate 203; these read SSGKGQ and EGLV. The ATP-grasp domain maps to 119–308; it reads RLAAETLSLP…EFALHVRAFL (190 aa). Mg(2+) is bound by residues glutamate 267 and glutamate 279. Residues aspartate 286, lysine 355, and 362 to 363 each bind N(1)-(5-phospho-beta-D-ribosyl)glycinamide; that span reads RR.

This sequence belongs to the PurK/PurT family. As to quaternary structure, homodimer.

The enzyme catalyses N(1)-(5-phospho-beta-D-ribosyl)glycinamide + formate + ATP = N(2)-formyl-N(1)-(5-phospho-beta-D-ribosyl)glycinamide + ADP + phosphate + H(+). It participates in purine metabolism; IMP biosynthesis via de novo pathway; N(2)-formyl-N(1)-(5-phospho-D-ribosyl)glycinamide from N(1)-(5-phospho-D-ribosyl)glycinamide (formate route): step 1/1. Involved in the de novo purine biosynthesis. Catalyzes the transfer of formate to 5-phospho-ribosyl-glycinamide (GAR), producing 5-phospho-ribosyl-N-formylglycinamide (FGAR). Formate is provided by PurU via hydrolysis of 10-formyl-tetrahydrofolate. The chain is Formate-dependent phosphoribosylglycinamide formyltransferase from Sodalis glossinidius (strain morsitans).